A 382-amino-acid polypeptide reads, in one-letter code: Lipid-A-disaccharide synthase (382 aa).

It belongs to the LpxB family.

The enzyme catalyses 2-N,3-O-bis[(3R)-3-hydroxytetradecanoyl]-alpha-D-glucosaminyl 1-phosphate + UDP-2-N,3-O-bis[(3R)-3-hydroxytetradecanoyl]-alpha-D-glucosamine = lipid A disaccharide (E. coli) + UDP + H(+). It carries out the reaction a lipid X + a UDP-2-N,3-O-bis[(3R)-3-hydroxyacyl]-alpha-D-glucosamine = a lipid A disaccharide + UDP + H(+). Its pathway is glycolipid biosynthesis; lipid IV(A) biosynthesis; lipid IV(A) from (3R)-3-hydroxytetradecanoyl-[acyl-carrier-protein] and UDP-N-acetyl-alpha-D-glucosamine: step 5/6. Its function is as follows. Condensation of UDP-2,3-diacylglucosamine and 2,3-diacylglucosamine-1-phosphate to form lipid A disaccharide, a precursor of lipid A, a phosphorylated glycolipid that anchors the lipopolysaccharide to the outer membrane of the cell. The polypeptide is Lipid-A-disaccharide synthase (Escherichia coli O157:H7).